The sequence spans 314 residues: 4-diphosphocytidyl-2-C-methyl-D-erythritol kinase (314 aa).

Lys11 is a catalytic residue. 99–109 (PMAAGLAGGST) contacts ATP. Asp141 is an active-site residue.

This sequence belongs to the GHMP kinase family. IspE subfamily.

It catalyses the reaction 4-CDP-2-C-methyl-D-erythritol + ATP = 4-CDP-2-C-methyl-D-erythritol 2-phosphate + ADP + H(+). The protein operates within isoprenoid biosynthesis; isopentenyl diphosphate biosynthesis via DXP pathway; isopentenyl diphosphate from 1-deoxy-D-xylulose 5-phosphate: step 3/6. In terms of biological role, catalyzes the phosphorylation of the position 2 hydroxy group of 4-diphosphocytidyl-2C-methyl-D-erythritol. The polypeptide is 4-diphosphocytidyl-2-C-methyl-D-erythritol kinase (Trichodesmium erythraeum (strain IMS101)).